The sequence spans 642 residues: Threonine--tRNA ligase (642 aa).

Residues 1–61 (MPAITLPDGS…AADAQVVFVT (61 aa)) enclose the TGS domain. Positions 243-536 (DHRRLGKEMD…LIEQYAGRFP (294 aa)) are catalytic. Residues C336, H387, and H513 each contribute to the Zn(2+) site.

Belongs to the class-II aminoacyl-tRNA synthetase family. In terms of assembly, homodimer. It depends on Zn(2+) as a cofactor.

It is found in the cytoplasm. The enzyme catalyses tRNA(Thr) + L-threonine + ATP = L-threonyl-tRNA(Thr) + AMP + diphosphate + H(+). In terms of biological role, catalyzes the attachment of threonine to tRNA(Thr) in a two-step reaction: L-threonine is first activated by ATP to form Thr-AMP and then transferred to the acceptor end of tRNA(Thr). Also edits incorrectly charged L-seryl-tRNA(Thr). In Granulibacter bethesdensis (strain ATCC BAA-1260 / CGDNIH1), this protein is Threonine--tRNA ligase.